A 132-amino-acid chain; its full sequence is Small ribosomal subunit protein uS8 (132 aa).

This sequence belongs to the universal ribosomal protein uS8 family. In terms of assembly, part of the 30S ribosomal subunit. Contacts proteins S5 and S12.

In terms of biological role, one of the primary rRNA binding proteins, it binds directly to 16S rRNA central domain where it helps coordinate assembly of the platform of the 30S subunit. The chain is Small ribosomal subunit protein uS8 from Paramagnetospirillum magneticum (strain ATCC 700264 / AMB-1) (Magnetospirillum magneticum).